A 1104-amino-acid chain; its full sequence is Inhibitory regulator protein BUD2/CLA2 (1104 aa).

An N-acetylserine modification is found at serine 2. Residues 316-444 form the C2 domain; it reads RSEYLSITGS…RYNKETRLPI (129 aa). The Ras-GAP domain occupies 536-753; sequence AKIDGTVSRI…NDLLDYIDKM (218 aa). Serine 854 carries the post-translational modification Phosphoserine. Residues 1027 to 1104 form a disordered region; that stretch reads NPKSSNKTSV…FKKKKETGGS (78 aa). Polar residues-rich tracts occupy residues 1029–1043 and 1052–1069; these read KSSN…SSEN and LPNS…SPTK. Residues 1090–1104 show a composition bias toward basic residues; sequence KLTRWFKKKKETGGS.

In terms of biological role, stimulates the GTPase activity of BUD1/RSR1. Participates in the regulation of bud-site selection. The chain is Inhibitory regulator protein BUD2/CLA2 (BUD2) from Saccharomyces cerevisiae (strain ATCC 204508 / S288c) (Baker's yeast).